The following is a 24-amino-acid chain: Large ribosomal subunit protein uL30 (24 aa).

Belongs to the universal ribosomal protein uL30 family. Part of the 50S ribosomal subunit.

The protein is Large ribosomal subunit protein uL30 (rpmD) of Ectopseudomonas mendocina (Pseudomonas mendocina).